The sequence spans 499 residues: NAD(P)H-quinone oxidoreductase chain 4, chloroplastic (499 aa).

Helical transmembrane passes span 4–24, 31–51, 87–107, 113–130, 134–154, 167–187, 211–231, 242–262, 274–294, 305–325, 330–350, 386–406, 416–436, and 462–482; these read LPWLTIIVILPISAGLLIPLF, MIRWYTLGICLLDLLLMTYIF, IGLILLTGFVTTLATLAAWPV, LLHFLMLAMYSGQLGLFA, ILLFFLMWELELIPVYLLLSM, FLLYTAGGSIFILMGALSMGL, ILLYLGFLIAYAIKLPIFPLH, HYSTCMLLAGVLLKMGGYGLI, SLFSPWLIIIGAVQIIYAALT, IAYSSISHMGFVIIGIGSMTY, GAILQMISHGLIGAALFFLVG, LALPGMSGFVAEFMIFLGVIT, IIITAIAAIGMILTPIYLLSM, and LFILICLFLPIIGIGLYPDLV.

The protein belongs to the complex I subunit 4 family.

It is found in the plastid. Its subcellular location is the chloroplast thylakoid membrane. The enzyme catalyses a plastoquinone + NADH + (n+1) H(+)(in) = a plastoquinol + NAD(+) + n H(+)(out). It catalyses the reaction a plastoquinone + NADPH + (n+1) H(+)(in) = a plastoquinol + NADP(+) + n H(+)(out). This chain is NAD(P)H-quinone oxidoreductase chain 4, chloroplastic, found in Cryptomeria japonica (Japanese cedar).